Consider the following 261-residue polypeptide: Acetylglutamate kinase (261 aa).

Substrate is bound by residues 48–49, arginine 70, and asparagine 164; that span reads GG.

This sequence belongs to the acetylglutamate kinase family. ArgB subfamily.

It is found in the cytoplasm. It catalyses the reaction N-acetyl-L-glutamate + ATP = N-acetyl-L-glutamyl 5-phosphate + ADP. It functions in the pathway amino-acid biosynthesis; L-arginine biosynthesis; N(2)-acetyl-L-ornithine from L-glutamate: step 2/4. Its function is as follows. Catalyzes the ATP-dependent phosphorylation of N-acetyl-L-glutamate. This chain is Acetylglutamate kinase, found in Roseiflexus sp. (strain RS-1).